The chain runs to 406 residues: Peptidyl-alpha-hydroxyglycine alpha-amidating lyase 2 (406 aa).

Residues 1-19 form the signal peptide; sequence MSRLLFVALLAISLGYVAS. NHL repeat units lie at residues 168–209, 218–261, 264–308, and 358–402; these read GAIK…FKPF, GKRF…FNAA, LLRT…PKAG, and DPRS…RVWK. Cystine bridges form between cysteine 231–cysteine 251 and cysteine 293–cysteine 304.

This sequence belongs to the peptidyl-alpha-hydroxyglycine alpha-amidating lyase family. The cofactor is Zn(2+). N-glycosylated. In terms of tissue distribution, only found in a subset of neurons distributed throughout all levels of the central nervous system (CNS). Present in at least some neuroendocrine cells. In adult brains, it is only present in a small handful of cells, the majority of which being distributed in distal parts of the medulla, with a higher expression in the posterior surface of the brain (at protein level).

It localises to the secreted. The catalysed reaction is a [peptide]-C-terminal (2S)-2-hydroxyglycine = a [peptide]-C-terminal amide + glyoxylate. Functionally, peptidyl-alpha-hydroxylglycine alpha-amidating lyase that catalyzes an essential reaction in C-terminal alpha-amidation of peptides. Mediates the dismutation of the unstable peptidyl(2-hydroxyglycine) intermediate to glyoxylate and the corresponding desglycine peptide amide. C-terminal amidation of peptides such as neuropeptides is essential for full biological activity. In Drosophila melanogaster (Fruit fly), this protein is Peptidyl-alpha-hydroxyglycine alpha-amidating lyase 2 (Pal2).